Reading from the N-terminus, the 115-residue chain is Insulin (115 aa).

The signal sequence occupies residues 1 to 22; it reads MAALWLQSVSLLVLMLVSWSGS. Intrachain disulfides connect C32/C101, C44/C114, and C100/C105. A propeptide spans 56–92 (c peptide); sequence DVDPLLGFLPAKSGGAAAGGENEVAEFAFKDQMEMMV.

The protein belongs to the insulin family. In terms of assembly, heterodimer of a B chain and an A chain linked by two disulfide bonds.

Its subcellular location is the secreted. Insulin decreases blood glucose concentration. It increases cell permeability to monosaccharides, amino acids and fatty acids. It accelerates glycolysis, the pentose phosphate cycle, and glycogen synthesis in liver. This chain is Insulin (ins), found in Verasper moseri (Barfin flounder).